A 382-amino-acid polypeptide reads, in one-letter code: Type 2 DNA topoisomerase 6 subunit A (382 aa).

Positions 14-155 constitute a Topo IIA-type catalytic domain; it reads YDPQKVLKKL…MHITADRRGY (142 aa). The active-site O-(5'-phospho-DNA)-tyrosine intermediate is the tyrosine 108. Positions 202 and 254 each coordinate Mg(2+).

This sequence belongs to the TOP6A family. As to quaternary structure, homodimer. Heterotetramer of two Top6A and two Top6B chains. It depends on Mg(2+) as a cofactor.

The catalysed reaction is ATP-dependent breakage, passage and rejoining of double-stranded DNA.. In terms of biological role, relaxes both positive and negative superturns and exhibits a strong decatenase activity. This chain is Type 2 DNA topoisomerase 6 subunit A, found in Pyrococcus abyssi (strain GE5 / Orsay).